A 228-amino-acid polypeptide reads, in one-letter code: Archaeal flagellar ATP-binding protein FlaH (228 aa).

Residues glycine 30, threonine 31, lysine 33, serine 34, valine 35, glutamate 57, and lysine 191 each coordinate ATP. Serine 34 is a Mg(2+) binding site. Mg(2+) is bound at residue glutamate 57.

Belongs to the FlaH family. The S.acidocaldarius archaellum assembly machinery and its filament consist of seven proteins (FlaB, FlaF, FlaG, FlaH, FlaI, FlaJ and FlaX). Interacts directly with the FlaX ring and the motor ATPase FlaI. Monomers, which can probably form homohexamers upon binding to ATP. In vitro, FlaH assembles as a second ring inside the FlaX ring.

It is found in the archaeal flagellum. It localises to the cytoplasm. In terms of biological role, component of the archaellum. FlaX, FlaH and FlaI form the core cytoplasmic motor complex of the crenarchaeal archaellum. FlaH binds ATP with high affinity but lacks detectable in vitro ATPase activity. ATP binding is essential for interaction with FlaI and for archaellum assembly. The sequence is that of Archaeal flagellar ATP-binding protein FlaH from Sulfolobus acidocaldarius (strain ATCC 33909 / DSM 639 / JCM 8929 / NBRC 15157 / NCIMB 11770).